Here is a 305-residue protein sequence, read N- to C-terminus: MSKKLTFQEIILTLQQYWNDQGCMLMQAYDNEKGAGTMSPYTFLRAIGPEPWNAAYVEPSRRPADGRYGENPNRLYQHHQFQVVMKPSPSNIQELYLASLEKLGINPLEHDIRFVEDNWENPSTGSAGLGWEVWLDGMEITQFTYFQQVGGLATSPVTAEVTYGLERLASYIQEVDSVYDIEWAPGVKYGEIFLQPEYEHSKYSFEMSDQDMLLENFEKFEKEASRALEEGLVHPAYDYVLKCSHTFNLLDARGAVSVTERAGYIARIRNLARVVAKTFVAERKKLGFPLLDEATRAILLAEDDE.

The protein belongs to the class-II aminoacyl-tRNA synthetase family. Tetramer of two alpha and two beta subunits.

Its subcellular location is the cytoplasm. It carries out the reaction tRNA(Gly) + glycine + ATP = glycyl-tRNA(Gly) + AMP + diphosphate. The protein is Glycine--tRNA ligase alpha subunit of Streptococcus pyogenes serotype M4 (strain MGAS10750).